A 268-amino-acid polypeptide reads, in one-letter code: Tryptophan synthase alpha chain (268 aa).

Active-site proton acceptor residues include Glu49 and Asp60.

Belongs to the TrpA family. As to quaternary structure, tetramer of two alpha and two beta chains.

The enzyme catalyses (1S,2R)-1-C-(indol-3-yl)glycerol 3-phosphate + L-serine = D-glyceraldehyde 3-phosphate + L-tryptophan + H2O. Its pathway is amino-acid biosynthesis; L-tryptophan biosynthesis; L-tryptophan from chorismate: step 5/5. Functionally, the alpha subunit is responsible for the aldol cleavage of indoleglycerol phosphate to indole and glyceraldehyde 3-phosphate. The chain is Tryptophan synthase alpha chain from Escherichia coli O6:H1 (strain CFT073 / ATCC 700928 / UPEC).